Reading from the N-terminus, the 353-residue chain is N-formyl peptide receptor 3 (353 aa).

The Extracellular segment spans residues 1–27 (METNFSIPLNETEEVLPEPAGHTVLWI). Asn4 and Asn10 each carry an N-linked (GlcNAc...) asparagine glycan. A helical transmembrane segment spans residues 28–50 (FSLLVHGVTFVFGVLGNGLVIWV). At 51–61 (AGFRMTRTVNT) the chain is on the cytoplasmic side. A helical transmembrane segment spans residues 62 to 83 (ICYLNLALADFSFSAILPFRMV). Residues 84-100 (SVAMREKWPFGSFLCKL) are Extracellular-facing. A disulfide bridge connects residues Cys98 and Cys176. A helical membrane pass occupies residues 101–121 (VHVMIDINLFVSVYLITIIAL). The Cytoplasmic segment spans residues 122 to 140 (DRCICVLHPAWAQNHRTMS). The chain crosses the membrane as a helical span at residues 141-162 (LAKRVMTGLWIFTIVLTLPNFI). Over 163-205 (FWTTISTTNGDTYCIFNFAFWGDTAVERLNVFITMAKVFLILH) the chain is Extracellular. A helical membrane pass occupies residues 206–226 (FIIGFSVPMSIITVCYGIIAA). Residues 227 to 242 (KIHRNHMIKSSRPLRV) lie on the Cytoplasmic side of the membrane. The helical transmembrane segment at 243–266 (FAAVVASFFICWFPYELIGILMAV) threads the bilayer. Over 267-286 (WLKEMLLNGKYKIILVLINP) the chain is Extracellular. Residues 287-306 (TSSLAFFNSCLNPILYVFMG) form a helical membrane-spanning segment. Residues 307 to 353 (RNFQERLIRSLPTSLERALTEVPDSAQTSNTDTTSASPPEETELQAM) are Cytoplasmic-facing. The interval 327 to 353 (EVPDSAQTSNTDTTSASPPEETELQAM) is disordered. Residues 331-343 (SAQTSNTDTTSAS) are compositionally biased toward polar residues.

It belongs to the G-protein coupled receptor 1 family. In terms of tissue distribution, detected in various tissues with highest expression in lung.

It localises to the cell membrane. Low affinity receptor for N-formyl-methionyl peptides, which are powerful neutrophils chemotactic factors. Binding of FMLP to the receptor causes activation of neutrophils. This response is mediated via a G-protein that activates a phosphatidylinositol-calcium second messenger system. Acts as a receptor for humanin. The sequence is that of N-formyl peptide receptor 3 (FPR3) from Homo sapiens (Human).